The chain runs to 460 residues: Alpha-amylase (460 aa).

A signal peptide spans 1-21; it reads MASRTLSGALALAAAATAVLA. Ca(2+)-binding residues include Asn121, Gln167, and Asp176. Asp206 functions as the Nucleophile in the catalytic mechanism. A Ca(2+)-binding site is contributed by His210. Catalysis depends on Glu233, which acts as the Proton donor.

It belongs to the glycosyl hydrolase 13 family. As to quaternary structure, monomer. It depends on Ca(2+) as a cofactor.

The catalysed reaction is Endohydrolysis of (1-&gt;4)-alpha-D-glucosidic linkages in polysaccharides containing three or more (1-&gt;4)-alpha-linked D-glucose units.. This is Alpha-amylase (amy) from Streptomyces thermoviolaceus.